The sequence spans 176 residues: Small ribosomal subunit protein uS5 (176 aa).

The S5 DRBM domain occupies 11 to 74; it reads LSEVLVDVNR…QAAKKKMMKV (64 aa).

This sequence belongs to the universal ribosomal protein uS5 family. In terms of assembly, part of the 30S ribosomal subunit. Contacts proteins S4 and S8.

With S4 and S12 plays an important role in translational accuracy. In terms of biological role, located at the back of the 30S subunit body where it stabilizes the conformation of the head with respect to the body. The protein is Small ribosomal subunit protein uS5 of Rickettsia bellii (strain RML369-C).